We begin with the raw amino-acid sequence, 312 residues long: Gamma-soluble NSF attachment protein (312 aa).

The interval 281 to 312 (KKKSPATPQAKPDGVTATAADEEEDEYSGGLC) is disordered. The residue at position 284 (S284) is a Phosphoserine. T287 carries the phosphothreonine modification. A compositionally biased stretch (acidic residues) spans 300–312 (ADEEEDEYSGGLC). Phosphoserine is present on S308.

The protein belongs to the SNAP family. As to quaternary structure, interacts with RAB11FIP5. Interacts with VTI1A.

It is found in the membrane. The protein resides in the golgi apparatus. Functionally, required for vesicular transport between the endoplasmic reticulum and the Golgi apparatus. This Homo sapiens (Human) protein is Gamma-soluble NSF attachment protein.